A 363-amino-acid chain; its full sequence is Histidine biosynthesis bifunctional protein HisB (363 aa).

A histidinol-phosphatase region spans residues 1–174 (MTQPTLFIDR…AVTNIGDRQP (174 aa)). Asp9 acts as the Nucleophile in catalysis. Residues Asp9 and Asp11 each coordinate Mg(2+). The active-site Proton donor is the Asp11. The Zn(2+) site is built by Cys92, His94, Cys100, and Cys102. A Mg(2+)-binding site is contributed by Asp129. Residues 175–363 (RYAEVVRKTK…NELPSSKGVL (189 aa)) are imidazoleglycerol-phosphate dehydratase.

This sequence in the N-terminal section; belongs to the histidinol-phosphatase family. The protein in the C-terminal section; belongs to the imidazoleglycerol-phosphate dehydratase family. The cofactor is Mg(2+). Zn(2+) serves as cofactor.

The protein resides in the cytoplasm. It carries out the reaction D-erythro-1-(imidazol-4-yl)glycerol 3-phosphate = 3-(imidazol-4-yl)-2-oxopropyl phosphate + H2O. The enzyme catalyses L-histidinol phosphate + H2O = L-histidinol + phosphate. The protein operates within amino-acid biosynthesis; L-histidine biosynthesis; L-histidine from 5-phospho-alpha-D-ribose 1-diphosphate: step 6/9. It participates in amino-acid biosynthesis; L-histidine biosynthesis; L-histidine from 5-phospho-alpha-D-ribose 1-diphosphate: step 8/9. This is Histidine biosynthesis bifunctional protein HisB from Actinobacillus pleuropneumoniae serotype 5b (strain L20).